The primary structure comprises 343 residues: Protein RecA (343 aa).

Position 64–71 (64–71) interacts with ATP; the sequence is GPESSGKT.

Belongs to the RecA family.

Its subcellular location is the cytoplasm. Its function is as follows. Can catalyze the hydrolysis of ATP in the presence of single-stranded DNA, the ATP-dependent uptake of single-stranded DNA by duplex DNA, and the ATP-dependent hybridization of homologous single-stranded DNAs. It interacts with LexA causing its activation and leading to its autocatalytic cleavage. This Bacillus mycoides (strain KBAB4) (Bacillus weihenstephanensis) protein is Protein RecA.